We begin with the raw amino-acid sequence, 171 residues long: Shikimate kinase (171 aa).

Residue 14–19 participates in ATP binding; sequence GAGKST. Ser-18 provides a ligand contact to Mg(2+). Residues Asp-36, Arg-60, and Gly-82 each coordinate substrate. An ATP-binding site is contributed by Arg-120. Arg-139 serves as a coordination point for substrate. Gln-156 contacts ATP.

This sequence belongs to the shikimate kinase family. Monomer. It depends on Mg(2+) as a cofactor.

The protein localises to the cytoplasm. The enzyme catalyses shikimate + ATP = 3-phosphoshikimate + ADP + H(+). Its pathway is metabolic intermediate biosynthesis; chorismate biosynthesis; chorismate from D-erythrose 4-phosphate and phosphoenolpyruvate: step 5/7. In terms of biological role, catalyzes the specific phosphorylation of the 3-hydroxyl group of shikimic acid using ATP as a cosubstrate. This Shewanella sp. (strain ANA-3) protein is Shikimate kinase.